Consider the following 336-residue polypeptide: Holliday junction branch migration complex subunit RuvB (336 aa).

The tract at residues 1–182 (MKERIVNLET…FGMSFRMQFY (182 aa)) is large ATPase domain (RuvB-L). ATP contacts are provided by residues leucine 21, arginine 22, glycine 63, lysine 66, threonine 67, serine 68, 129–131 (EDF), arginine 172, tyrosine 182, and arginine 219. Position 67 (threonine 67) interacts with Mg(2+). The interval 183–253 (SPSELALIIK…ITLHALNELG (71 aa)) is small ATPAse domain (RuvB-S). A head domain (RuvB-H) region spans residues 256 to 336 (ELGFDEADLA…IPTLKSQSLF (81 aa)). The DNA site is built by arginine 310 and arginine 315.

This sequence belongs to the RuvB family. As to quaternary structure, homohexamer. Forms an RuvA(8)-RuvB(12)-Holliday junction (HJ) complex. HJ DNA is sandwiched between 2 RuvA tetramers; dsDNA enters through RuvA and exits via RuvB. An RuvB hexamer assembles on each DNA strand where it exits the tetramer. Each RuvB hexamer is contacted by two RuvA subunits (via domain III) on 2 adjacent RuvB subunits; this complex drives branch migration. In the full resolvosome a probable DNA-RuvA(4)-RuvB(12)-RuvC(2) complex forms which resolves the HJ.

The protein localises to the cytoplasm. The enzyme catalyses ATP + H2O = ADP + phosphate + H(+). The RuvA-RuvB-RuvC complex processes Holliday junction (HJ) DNA during genetic recombination and DNA repair, while the RuvA-RuvB complex plays an important role in the rescue of blocked DNA replication forks via replication fork reversal (RFR). RuvA specifically binds to HJ cruciform DNA, conferring on it an open structure. The RuvB hexamer acts as an ATP-dependent pump, pulling dsDNA into and through the RuvAB complex. RuvB forms 2 homohexamers on either side of HJ DNA bound by 1 or 2 RuvA tetramers; 4 subunits per hexamer contact DNA at a time. Coordinated motions by a converter formed by DNA-disengaged RuvB subunits stimulates ATP hydrolysis and nucleotide exchange. Immobilization of the converter enables RuvB to convert the ATP-contained energy into a lever motion, pulling 2 nucleotides of DNA out of the RuvA tetramer per ATP hydrolyzed, thus driving DNA branch migration. The RuvB motors rotate together with the DNA substrate, which together with the progressing nucleotide cycle form the mechanistic basis for DNA recombination by continuous HJ branch migration. Branch migration allows RuvC to scan DNA until it finds its consensus sequence, where it cleaves and resolves cruciform DNA. This chain is Holliday junction branch migration complex subunit RuvB, found in Helicobacter acinonychis (strain Sheeba).